Reading from the N-terminus, the 177-residue chain is Large ribosomal subunit protein uL6 (177 aa).

It belongs to the universal ribosomal protein uL6 family. In terms of assembly, part of the 50S ribosomal subunit.

In terms of biological role, this protein binds to the 23S rRNA, and is important in its secondary structure. It is located near the subunit interface in the base of the L7/L12 stalk, and near the tRNA binding site of the peptidyltransferase center. This Aeromonas salmonicida (strain A449) protein is Large ribosomal subunit protein uL6.